The following is a 121-amino-acid chain: Neuromedin-B (121 aa).

Positions 1 to 24 are cleaved as a signal peptide; sequence MARRAGGARMFGSLLLFALLAAGV. M56 is subject to Methionine amide. The propeptide occupies 60–121; that stretch reads SLEPSSPSPL…RRLLVQILQK (62 aa).

This sequence belongs to the bombesin/neuromedin-B/ranatensin family.

It is found in the secreted. The protein resides in the cell projection. Its subcellular location is the neuron projection. Stimulates smooth muscle contraction. Induces sighing by acting directly on the pre-Botzinger complex, a cluster of several thousand neurons in the ventrolateral medulla responsible for inspiration during respiratory activity. Contributes to the induction of sneezing following exposure to chemical irritants or allergens which causes release of NMB by nasal sensory neurons and activation of NMBR-expressing neurons in the sneeze-evoking region of the brainstem. These in turn activate neurons of the caudal ventral respiratory group, giving rise to the sneezing response. Contributes to induction of acute itch, possibly through activation of the NMBR receptor on dorsal root ganglion neurons. Increases expression of NMBR and steroidogenic mediators STAR, CYP11A1 and HSD3B1 in Leydig cells, induces secretion of testosterone by Leydig cells and also promotes Leydig cell proliferation. Plays a role in the innate immune response to influenza A virus infection by enhancing interferon alpha expression and reducing expression of IL6. Plays a role in CSF1-induced proliferation of osteoclast precursors by contributing to the positive regulation of the expression of the CSF1 receptor CSF1R. This Homo sapiens (Human) protein is Neuromedin-B (NMB).